The following is a 341-amino-acid chain: Cyanuric acid amidohydrolase (341 aa).

The segment at 1–90 (MAPIEILKFP…HVTFFLRSPG (90 aa)) is RU A. Substrate is bound by residues Arg-51 and 71-72 (SG). Positions 95–229 (GLSAAVGHTR…CHILVLASTS (135 aa)) are RU B. The active site involves Lys-144. Substrate contacts are provided by residues Arg-176 and 212 to 213 (SS). Catalysis depends on Ser-212, which acts as the Nucleophile. The segment at 235-341 (LHAVSRPMAD…SLCLVYETSI (107 aa)) is RU C. Residue Glu-273 coordinates Mg(2+). Substrate is bound by residues Arg-300 and 319–320 (SG). Ala-322, Gln-325, Gly-326, Pro-327, and Gly-330 together coordinate Mg(2+).

The protein belongs to the cyclic amide hydrolase (CyAH) family. As to quaternary structure, homotetramer.

It catalyses the reaction cyanurate + H2O = 1-carboxybiuret + H(+). Its pathway is xenobiotic degradation; atrazine degradation; biuret from cyanurate: step 1/1. Its activity is regulated as follows. Inhibited by barbituric acid. In terms of biological role, responsible for the hydrolysis of cyanuric acid, an intermediate formed during catabolism of s-triazine based compounds in herbicides such as atrazine and polymers such as melamine. Catalyzes the hydrolytic opening of the s-triazine ring of cyanuric acid (2,4,6-trihydroxy-s-triazine) to yield carbon dioxide and carboxybiuret, which spontaneously decarboxylates to biuret. Only active on cyanuric acid and N-methylisocyanuric acid. The polypeptide is Cyanuric acid amidohydrolase (Sarocladium sp).